We begin with the raw amino-acid sequence, 671 residues long: UvrABC system protein B (671 aa).

The Helicase ATP-binding domain occupies 25–412; sequence EGIEAGLSHQ…AGRVVEQVVR (388 aa). 38-45 lines the ATP pocket; that stretch reads GVTGSGKT. Positions 91 to 114 match the Beta-hairpin motif; the sequence is YYDYYQPEAYVPSSDTFIEKDASI. One can recognise a Helicase C-terminal domain in the interval 429–582; that stretch reads QVDDLLSEIR…QIAFNEANGI (154 aa). One can recognise a UVR domain in the interval 632–667; it reads TKRIKQLEEKMMQFARDLEFEAAAQLRDEIAQLRER.

It belongs to the UvrB family. In terms of assembly, forms a heterotetramer with UvrA during the search for lesions. Interacts with UvrC in an incision complex.

The protein localises to the cytoplasm. Its function is as follows. The UvrABC repair system catalyzes the recognition and processing of DNA lesions. A damage recognition complex composed of 2 UvrA and 2 UvrB subunits scans DNA for abnormalities. Upon binding of the UvrA(2)B(2) complex to a putative damaged site, the DNA wraps around one UvrB monomer. DNA wrap is dependent on ATP binding by UvrB and probably causes local melting of the DNA helix, facilitating insertion of UvrB beta-hairpin between the DNA strands. Then UvrB probes one DNA strand for the presence of a lesion. If a lesion is found the UvrA subunits dissociate and the UvrB-DNA preincision complex is formed. This complex is subsequently bound by UvrC and the second UvrB is released. If no lesion is found, the DNA wraps around the other UvrB subunit that will check the other stand for damage. The protein is UvrABC system protein B of Pseudomonas putida (strain ATCC 47054 / DSM 6125 / CFBP 8728 / NCIMB 11950 / KT2440).